A 307-amino-acid chain; its full sequence is Aspartate carbamoyltransferase catalytic subunit (307 aa).

Residues Arg56 and Thr57 each contribute to the carbamoyl phosphate site. Lys84 is an L-aspartate binding site. Residues Arg106, His136, and Gln139 each contribute to the carbamoyl phosphate site. L-aspartate contacts are provided by Arg169 and Arg221. Carbamoyl phosphate-binding residues include Ala262 and Pro263.

The protein belongs to the aspartate/ornithine carbamoyltransferase superfamily. ATCase family. In terms of assembly, heterododecamer (2C3:3R2) of six catalytic PyrB chains organized as two trimers (C3), and six regulatory PyrI chains organized as three dimers (R2).

It catalyses the reaction carbamoyl phosphate + L-aspartate = N-carbamoyl-L-aspartate + phosphate + H(+). Its pathway is pyrimidine metabolism; UMP biosynthesis via de novo pathway; (S)-dihydroorotate from bicarbonate: step 2/3. Catalyzes the condensation of carbamoyl phosphate and aspartate to form carbamoyl aspartate and inorganic phosphate, the committed step in the de novo pyrimidine nucleotide biosynthesis pathway. This is Aspartate carbamoyltransferase catalytic subunit from Streptococcus pneumoniae (strain 70585).